We begin with the raw amino-acid sequence, 182 residues long: Phospholipase A2 inhibitor gamma subunit A2 (182 aa).

Cystine bridges form between C3/C27, C6/C13, C20/C48, C54/C75, C76/C81, C99/C124, C117/C146, and C150/C172. N-linked (GlcNAc...) asparagine glycosylation is present at N157.

The protein belongs to the CNF-like-inhibitor family. In terms of assembly, heterodimer of subunit A and subunit B.

Its subcellular location is the secreted. In terms of biological role, phospholipase A2 (PA2) inhibitor. Inhibits the enzymatic activity of PA2 of Deinagkistrodon acutus. Also shows a wide anti-hemorrhage activities to D.acutus, Naja atra and Agkistrodon halys venom. The native protein is more potent than the recombinant one. The protein is Phospholipase A2 inhibitor gamma subunit A2 of Trimerodytes annularis (Red-bellied annulate keelback).